The primary structure comprises 413 residues: Serine hydroxymethyltransferase (413 aa).

Residues Leu116 and 120–122 (GHL) contribute to the (6S)-5,6,7,8-tetrahydrofolate site. An N6-(pyridoxal phosphate)lysine modification is found at Lys225. 349–351 (SPF) is a (6S)-5,6,7,8-tetrahydrofolate binding site.

This sequence belongs to the SHMT family. In terms of assembly, homodimer. It depends on pyridoxal 5'-phosphate as a cofactor.

The protein resides in the cytoplasm. The catalysed reaction is (6R)-5,10-methylene-5,6,7,8-tetrahydrofolate + glycine + H2O = (6S)-5,6,7,8-tetrahydrofolate + L-serine. The protein operates within one-carbon metabolism; tetrahydrofolate interconversion. It functions in the pathway amino-acid biosynthesis; glycine biosynthesis; glycine from L-serine: step 1/1. Its function is as follows. Catalyzes the reversible interconversion of serine and glycine with tetrahydrofolate (THF) serving as the one-carbon carrier. This reaction serves as the major source of one-carbon groups required for the biosynthesis of purines, thymidylate, methionine, and other important biomolecules. Also exhibits THF-independent aldolase activity toward beta-hydroxyamino acids, producing glycine and aldehydes, via a retro-aldol mechanism. The polypeptide is Serine hydroxymethyltransferase (Levilactobacillus brevis (strain ATCC 367 / BCRC 12310 / CIP 105137 / JCM 1170 / LMG 11437 / NCIMB 947 / NCTC 947) (Lactobacillus brevis)).